Here is a 282-residue protein sequence, read N- to C-terminus: NAD kinase (282 aa).

The active-site Proton acceptor is Asp67. Residues 67–68, 140–141, His151, Arg170, Asp172, and 183–188 each bind NAD(+); these read DG, NE, and TAYNLS.

The protein belongs to the NAD kinase family. A divalent metal cation serves as cofactor.

It is found in the cytoplasm. It catalyses the reaction NAD(+) + ATP = ADP + NADP(+) + H(+). Involved in the regulation of the intracellular balance of NAD and NADP, and is a key enzyme in the biosynthesis of NADP. Catalyzes specifically the phosphorylation on 2'-hydroxyl of the adenosine moiety of NAD to yield NADP. The polypeptide is NAD kinase (Halobacterium salinarum (strain ATCC 700922 / JCM 11081 / NRC-1) (Halobacterium halobium)).